A 365-amino-acid chain; its full sequence is Histidinol-phosphate aminotransferase (365 aa).

N6-(pyridoxal phosphate)lysine is present on K223.

It belongs to the class-II pyridoxal-phosphate-dependent aminotransferase family. Histidinol-phosphate aminotransferase subfamily. Homodimer. It depends on pyridoxal 5'-phosphate as a cofactor.

It carries out the reaction L-histidinol phosphate + 2-oxoglutarate = 3-(imidazol-4-yl)-2-oxopropyl phosphate + L-glutamate. It participates in amino-acid biosynthesis; L-histidine biosynthesis; L-histidine from 5-phospho-alpha-D-ribose 1-diphosphate: step 7/9. The chain is Histidinol-phosphate aminotransferase from Brucella abortus (strain 2308).